The sequence spans 425 residues: Histidine--tRNA ligase (425 aa).

Belongs to the class-II aminoacyl-tRNA synthetase family. As to quaternary structure, homodimer.

It is found in the cytoplasm. The enzyme catalyses tRNA(His) + L-histidine + ATP = L-histidyl-tRNA(His) + AMP + diphosphate + H(+). In Listeria monocytogenes serovar 1/2a (strain ATCC BAA-679 / EGD-e), this protein is Histidine--tRNA ligase.